A 196-amino-acid chain; its full sequence is Zinc finger C2H2 protein ECU03_0940 (196 aa).

2 consecutive C2H2-type zinc fingers follow at residues 130–155 (YACE…KEGH) and 166–191 (YVCP…KHYH).

The sequence is that of Zinc finger C2H2 protein ECU03_0940 from Encephalitozoon cuniculi (strain GB-M1) (Microsporidian parasite).